Here is a 191-residue protein sequence, read N- to C-terminus: Protein YceI (191 aa).

Positions 1–22 are cleaved as a signal peptide; it reads MKKSLLGLTFASLMFSAGSAVA.

Belongs to the UPF0312 family. Type 1 subfamily.

The protein resides in the periplasm. This Escherichia coli O17:K52:H18 (strain UMN026 / ExPEC) protein is Protein YceI.